The primary structure comprises 332 residues: Putative integrase/recombinase y4rC (332 aa).

The region spanning 5 to 98 (ASLAPLLESF…AIHSFFRYAA (94 aa)) is the Core-binding (CB) domain. The Tyr recombinase domain maps to 122–307 (TLVNFLTRPE…TLAMKEAALA (186 aa)). Catalysis depends on residues Arg-162, Lys-187, His-259, Arg-262, and His-285. Tyr-294 serves as the catalytic O-(3'-phospho-DNA)-tyrosine intermediate.

Belongs to the 'phage' integrase family.

The polypeptide is Putative integrase/recombinase y4rC (Sinorhizobium fredii (strain NBRC 101917 / NGR234)).